The chain runs to 563 residues: Calmodulin-binding protein 60 G (563 aa).

Residues 1–76 (MKIRNSPSFH…SSCVSMERSR (76 aa)) are calmodulin-binding. Residues 147-263 (ESWTVEGFNR…VSATRLAERK (117 aa)) are DNA-binding.

The protein belongs to the plant ACBP60 protein family. As to quaternary structure, interacts with calmodulin (CaM) in the presence of calcium ions; this interaction is required for defense responses. (Microbial infection) Interacts with V.dahliae SCP41; the interaction is direct and inhibits CBP60G. As to expression, expressed in seedlings, roots, leaves, inflorescences and flowers, and, to a lower extent, in siliques. Particularly present in guard cells.

The protein resides in the nucleus. Transcription activator that binds DNA in a sequence-specific manner, 5'-GAAATTTTGG-3', to promote the expression of target genes. Recruited to the promoter of ICS1 and other defense-related genes (e.g. PR1, PR2 and EDS5) in response to both biotic (e.g. Pseudomonas syringae pv. maculicola ES4326, P.syringae pv. tomato DC3000, and microbe-associated molecular patterns (MAMPs) such as flg22) and abiotic stresses (e.g. UV-B, drought and abscisic acid), thus triggering rapid defense responses by stimulating salicylic acid (SA) biosynthesis. Involved in basal and systemic acquired resistance to P.syringae and Hyaloperonospora arabidopsidis. Mediates resistance to drought and sensitivity to abscisic acid (ABA), especially for ABA-mediated signaling process that regulates early seedling growth. This is Calmodulin-binding protein 60 G from Arabidopsis thaliana (Mouse-ear cress).